A 244-amino-acid polypeptide reads, in one-letter code: Proteasome subunit alpha (244 aa).

This sequence belongs to the peptidase T1A family. As to quaternary structure, the 20S proteasome core is composed of 14 alpha and 14 beta subunits that assemble into four stacked heptameric rings, resulting in a barrel-shaped structure. The two inner rings, each composed of seven catalytic beta subunits, are sandwiched by two outer rings, each composed of seven alpha subunits. The catalytic chamber with the active sites is on the inside of the barrel. Has a gated structure, the ends of the cylinder being occluded by the N-termini of the alpha-subunits. Is capped by the proteasome-associated ATPase, ARC.

The protein resides in the cytoplasm. The protein operates within protein degradation; proteasomal Pup-dependent pathway. Its activity is regulated as follows. The formation of the proteasomal ATPase ARC-20S proteasome complex, likely via the docking of the C-termini of ARC into the intersubunit pockets in the alpha-rings, may trigger opening of the gate for substrate entry. Interconversion between the open-gate and close-gate conformations leads to a dynamic regulation of the 20S proteasome proteolysis activity. Functionally, component of the proteasome core, a large protease complex with broad specificity involved in protein degradation. The chain is Proteasome subunit alpha from Xylanimonas cellulosilytica (strain DSM 15894 / JCM 12276 / CECT 5975 / KCTC 9989 / LMG 20990 / NBRC 107835 / XIL07).